A 212-amino-acid chain; its full sequence is Large ribosomal subunit protein uL3 (212 aa).

Residues 127–153 (FRGGPATHGQSDRHRAPGSIGSGTTPG) are disordered.

This sequence belongs to the universal ribosomal protein uL3 family. As to quaternary structure, part of the 50S ribosomal subunit. Forms a cluster with proteins L14 and L19.

Functionally, one of the primary rRNA binding proteins, it binds directly near the 3'-end of the 23S rRNA, where it nucleates assembly of the 50S subunit. This Herpetosiphon aurantiacus (strain ATCC 23779 / DSM 785 / 114-95) protein is Large ribosomal subunit protein uL3.